The following is a 207-amino-acid chain: Testis-expressed protein 35 (207 aa).

The stretch at 43–79 (RKGMTRELKNELREVREQLTEKMEEIKQIKDIMDKDF) forms a coiled coil.

Testis-specific. Expressed during spermatogenesis.

The protein resides in the nucleus. The sequence is that of Testis-expressed protein 35 (Tex35) from Mus musculus (Mouse).